The primary structure comprises 81 residues: Putative membrane protein insertion efficiency factor (81 aa).

This sequence belongs to the UPF0161 family.

The protein localises to the cell inner membrane. Its function is as follows. Could be involved in insertion of integral membrane proteins into the membrane. The protein is Putative membrane protein insertion efficiency factor of Thermosipho melanesiensis (strain DSM 12029 / CIP 104789 / BI429).